The primary structure comprises 55 residues: Neurotoxin B-IV (55 aa).

Position 10 is a hydroxyproline (proline 10). 4 cysteine pairs are disulfide-bonded: cysteine 12–cysteine 52, cysteine 16–cysteine 48, cysteine 23–cysteine 41, and cysteine 26–cysteine 37.

It belongs to the worm B-toxin family.

It localises to the secreted. This toxin increases the excitability of nerves by delaying the inactivation of the voltage-gated sodium channel (Nav). Only acts on some crustacean. Is more abundant, but 15-fold less toxic than neurotoxin B-II. The sequence is that of Neurotoxin B-IV from Cerebratulus lacteus (Milky ribbon worm).